The primary structure comprises 86 residues: Mu-theraphotoxin-Hhn1d (86 aa).

The N-terminal stretch at 1-21 is a signal peptide; sequence MKASMFLALAGLALLFVVCYA. The propeptide occupies 22–49; the sequence is SESEEKEFSNELLSSVLAVDDNSKGEER. Cystine bridges form between Cys51/Cys66, Cys58/Cys73, and Cys65/Cys80. Ile84 is modified (isoleucine amide).

It belongs to the neurotoxin 10 (Hwtx-1) family. 22 (Htx-4) subfamily. Monomer. Expressed by the venom gland.

It localises to the secreted. Its function is as follows. Neurotoxin. Selectively blocks neuronal tetrodotoxin-sensitive voltage-gated sodium channels (Nav). Does not affect tetrodotoxin-resistant voltage-gated sodium channels or calcium channels. The polypeptide is Mu-theraphotoxin-Hhn1d (Cyriopagopus hainanus (Chinese bird spider)).